The primary structure comprises 193 residues: dTTP/UTP pyrophosphatase (193 aa).

Residue D75 is the Proton acceptor of the active site.

The protein belongs to the Maf family. YhdE subfamily. The cofactor is a divalent metal cation.

Its subcellular location is the cytoplasm. The enzyme catalyses dTTP + H2O = dTMP + diphosphate + H(+). It carries out the reaction UTP + H2O = UMP + diphosphate + H(+). Functionally, nucleoside triphosphate pyrophosphatase that hydrolyzes dTTP and UTP. May have a dual role in cell division arrest and in preventing the incorporation of modified nucleotides into cellular nucleic acids. This is dTTP/UTP pyrophosphatase from Chlorobium phaeovibrioides (strain DSM 265 / 1930) (Prosthecochloris vibrioformis (strain DSM 265)).